We begin with the raw amino-acid sequence, 591 residues long: L-fucose isomerase (591 aa).

Catalysis depends on proton acceptor residues glutamate 338 and aspartate 362. Mn(2+)-binding residues include glutamate 338, aspartate 362, and histidine 529.

The protein belongs to the L-fucose isomerase family. Mn(2+) is required as a cofactor.

The protein resides in the cytoplasm. The catalysed reaction is L-fucose = L-fuculose. The protein operates within carbohydrate degradation; L-fucose degradation; L-lactaldehyde and glycerone phosphate from L-fucose: step 1/3. Converts the aldose L-fucose into the corresponding ketose L-fuculose. The protein is L-fucose isomerase of Phocaeicola vulgatus (strain ATCC 8482 / DSM 1447 / JCM 5826 / CCUG 4940 / NBRC 14291 / NCTC 11154) (Bacteroides vulgatus).